A 116-amino-acid chain; its full sequence is NADH-ubiquinone oxidoreductase chain 3 (116 aa).

3 helical membrane-spanning segments follow: residues 3–23 (LITT…TVSF), 56–76 (FFLI…LLPL), and 85–105 (PALT…GLIY).

Belongs to the complex I subunit 3 family.

Its subcellular location is the mitochondrion membrane. The enzyme catalyses a ubiquinone + NADH + 5 H(+)(in) = a ubiquinol + NAD(+) + 4 H(+)(out). In terms of biological role, core subunit of the mitochondrial membrane respiratory chain NADH dehydrogenase (Complex I) that is believed to belong to the minimal assembly required for catalysis. Complex I functions in the transfer of electrons from NADH to the respiratory chain. The immediate electron acceptor for the enzyme is believed to be ubiquinone. The sequence is that of NADH-ubiquinone oxidoreductase chain 3 (MT-ND3) from Salmo trutta (Brown trout).